Here is a 296-residue protein sequence, read N- to C-terminus: Cutinase est1 (296 aa).

An N-terminal signal peptide occupies residues 1-35 (MSVTTPRREASLLSRAVAVAAAAAATVALAAPAQA). A disordered region spans residues 36–57 (ANPYERGPNPTESMLEARSGPF). Residue Y95 participates in poly(ethylene terephthalate) binding. Residue S165 is the Nucleophile of the active site. Residues M166 and W190 each contribute to the poly(ethylene terephthalate) site. Residues D211 and H243 each act as charge relay system in the active site. The cysteines at positions 276 and 294 are disulfide-linked.

This sequence belongs to the AB hydrolase superfamily. Monomer.

It localises to the secreted. It is found in the periplasm. It catalyses the reaction (ethylene terephthalate)(n) + H2O = (ethylene terephthalate)(n-1) + 4-[(2-hydroxyethoxy)carbonyl]benzoate + H(+). It carries out the reaction a butanoate ester + H2O = an aliphatic alcohol + butanoate + H(+). The enzyme catalyses cutin + H2O = cutin monomers.. Its function is as follows. Catalyzes the hydrolysis of cutin, a polyester that forms the structure of plant cuticle. Shows esterase activity towards p-nitrophenol-linked aliphatic esters (pNP-aliphatic esters). Capable of degrading the plastic poly(ethylene terephthalate) (PET), the most abundant polyester plastic in the world. Can also depolymerize the synthetic polyester poly(epsilon-caprolactone) (PCL). This Thermobifida alba (Thermomonospora alba) protein is Cutinase est1.